A 341-amino-acid polypeptide reads, in one-letter code: Phosphate acyltransferase (341 aa).

The protein belongs to the PlsX family. As to quaternary structure, homodimer. Probably interacts with PlsY.

Its subcellular location is the cytoplasm. The catalysed reaction is a fatty acyl-[ACP] + phosphate = an acyl phosphate + holo-[ACP]. It functions in the pathway lipid metabolism; phospholipid metabolism. Functionally, catalyzes the reversible formation of acyl-phosphate (acyl-PO(4)) from acyl-[acyl-carrier-protein] (acyl-ACP). This enzyme utilizes acyl-ACP as fatty acyl donor, but not acyl-CoA. The sequence is that of Phosphate acyltransferase from Ehrlichia ruminantium (strain Gardel).